The chain runs to 115 residues: Large ribosomal subunit protein uL22c (115 aa).

The protein belongs to the universal ribosomal protein uL22 family. Part of the 50S ribosomal subunit.

It localises to the plastid. The protein localises to the chloroplast. Its function is as follows. This protein binds specifically to 23S rRNA. Functionally, the globular domain of the protein is located near the polypeptide exit tunnel on the outside of the subunit, while an extended beta-hairpin is found that lines the wall of the exit tunnel in the center of the 70S ribosome. The sequence is that of Large ribosomal subunit protein uL22c (rpl22) from Phaeodactylum tricornutum (strain CCAP 1055/1).